A 152-amino-acid polypeptide reads, in one-letter code: Cytochrome c oxidase subunit 5A, mitochondrial (152 aa).

A mitochondrion-targeting transit peptide spans Met1–Tyr43. The SIFI-degron signature appears at Leu2–Arg22. N6-acetyllysine occurs at positions 89 and 115. Thr143 is subject to Phosphothreonine.

It belongs to the cytochrome c oxidase subunit 5A family. In terms of assembly, component of the cytochrome c oxidase (complex IV, CIV), a multisubunit enzyme composed of 14 subunits. The complex is composed of a catalytic core of 3 subunits MT-CO1, MT-CO2 and MT-CO3, encoded in the mitochondrial DNA, and 11 supernumerary subunits COX4I, COX5A, COX5B, COX6A, COX6B, COX6C, COX7A, COX7B, COX7C, COX8 and NDUFA4, which are encoded in the nuclear genome. The complex exists as a monomer or a dimer and forms supercomplexes (SCs) in the inner mitochondrial membrane with NADH-ubiquinone oxidoreductase (complex I, CI) and ubiquinol-cytochrome c oxidoreductase (cytochrome b-c1 complex, complex III, CIII), resulting in different assemblies (supercomplex SCI(1)III(2)IV(1) and megacomplex MCI(2)III(2)IV(2)). Interacts with AFG1L. Interacts with RAB5IF. In terms of processing, in response to mitochondrial stress, the precursor protein is ubiquitinated by the SIFI complex in the cytoplasm before mitochondrial import, leading to its degradation. Within the SIFI complex, UBR4 initiates ubiquitin chain that are further elongated or branched by KCMF1.

It is found in the mitochondrion inner membrane. Its pathway is energy metabolism; oxidative phosphorylation. Component of the cytochrome c oxidase, the last enzyme in the mitochondrial electron transport chain which drives oxidative phosphorylation. The respiratory chain contains 3 multisubunit complexes succinate dehydrogenase (complex II, CII), ubiquinol-cytochrome c oxidoreductase (cytochrome b-c1 complex, complex III, CIII) and cytochrome c oxidase (complex IV, CIV), that cooperate to transfer electrons derived from NADH and succinate to molecular oxygen, creating an electrochemical gradient over the inner membrane that drives transmembrane transport and the ATP synthase. Cytochrome c oxidase is the component of the respiratory chain that catalyzes the reduction of oxygen to water. Electrons originating from reduced cytochrome c in the intermembrane space (IMS) are transferred via the dinuclear copper A center (CU(A)) of subunit 2 and heme A of subunit 1 to the active site in subunit 1, a binuclear center (BNC) formed by heme A3 and copper B (CU(B)). The BNC reduces molecular oxygen to 2 water molecules using 4 electrons from cytochrome c in the IMS and 4 protons from the mitochondrial matrix. The chain is Cytochrome c oxidase subunit 5A, mitochondrial (COX5A) from Eulemur fulvus fulvus (Brown lemur).